A 193-amino-acid polypeptide reads, in one-letter code: Large ribosomal subunit protein eL18 (193 aa).

The disordered stretch occupies residues 158–193; the sequence is HFGAAGVPGSHAKPHVSSRGKERQRSSKRRHAFRHK. The segment covering 183-193 has biased composition (basic residues); that stretch reads SSKRRHAFRHK.

This sequence belongs to the eukaryotic ribosomal protein eL18 family.

It localises to the cytoplasm. The polypeptide is Large ribosomal subunit protein eL18 (RPL18-A) (Trypanosoma brucei brucei (strain 927/4 GUTat10.1)).